The chain runs to 219 residues: Cytidylate kinase (219 aa).

11–19 (GTAGSGKTA) provides a ligand contact to ATP.

This sequence belongs to the cytidylate kinase family. Type 1 subfamily.

The protein resides in the cytoplasm. The catalysed reaction is CMP + ATP = CDP + ADP. It carries out the reaction dCMP + ATP = dCDP + ADP. This is Cytidylate kinase from Mesoplasma florum (strain ATCC 33453 / NBRC 100688 / NCTC 11704 / L1) (Acholeplasma florum).